The following is a 197-amino-acid chain: 5'-deoxynucleotidase yfbR (197 aa).

Substrate contacts are provided by residues 16-17 and histidine 31; that span reads RW. The HD domain maps to 28 to 140; the sequence is VSEHSLQVAF…VKQADALCAY (113 aa). Residues histidine 31, histidine 66, and aspartate 67 each contribute to the a divalent metal cation site. Substrate is bound by residues aspartate 67, 75-78, and aspartate 135; that span reads DLPT. Aspartate 135 serves as a coordination point for a divalent metal cation.

Belongs to the 5DNU family. Homodimer. A divalent metal cation serves as cofactor.

The protein localises to the cytoplasm. The catalysed reaction is a 2'-deoxyribonucleoside 5'-phosphate + H2O = a 2'-deoxyribonucleoside + phosphate. Functionally, catalyzes the strictly specific dephosphorylation of 2'-deoxyribonucleoside 5'-monophosphates. The polypeptide is 5'-deoxynucleotidase yfbR (Photorhabdus temperata).